The following is a 75-amino-acid chain: Protein RALF-like 9 (75 aa).

An N-terminal signal peptide occupies residues 1 to 28 (MGMSKSIKVILSLALVVFLALAATKVEA). Intrachain disulfides connect C46–C54 and C66–C72.

Belongs to the plant rapid alkalinization factor (RALF) family.

Its subcellular location is the secreted. Functionally, cell signaling peptide that may regulate plant stress, growth, and development. Mediates a rapid alkalinization of extracellular space by mediating a transient increase in the cytoplasmic Ca(2+) concentration leading to a calcium-dependent signaling events through a cell surface receptor and a concomitant activation of some intracellular mitogen-activated protein kinases. In Arabidopsis thaliana (Mouse-ear cress), this protein is Protein RALF-like 9 (RALFL9).